Reading from the N-terminus, the 247-residue chain is Mast cell protease 8 (247 aa).

Positions 1–19 (MFLLLVLLVAALPVNAEGG) are cleaved as a signal peptide. Glu20 is a propeptide (activation peptide). In terms of domain architecture, Peptidase S1 spans 21–242 (IIWGTESKPH…FMPWIRKTMK (222 aa)). N-linked (GlcNAc...) asparagine glycosylation is present at Asn41. A disulfide bond links Cys49 and Cys65. His64 functions as the Charge relay system in the catalytic mechanism. 2 N-linked (GlcNAc...) asparagine glycosylation sites follow: Asn71 and Asn101. Asp107 serves as the catalytic Charge relay system. Disulfide bonds link Cys141–Cys206 and Cys171–Cys185. 2 N-linked (GlcNAc...) asparagine glycosylation sites follow: Asn151 and Asn179. The Charge relay system role is filled by Ser200.

The protein belongs to the peptidase S1 family. Granzyme subfamily.

The protein localises to the secreted. It is found in the cytoplasmic granule. In Mus musculus (Mouse), this protein is Mast cell protease 8 (Mcpt8).